The primary structure comprises 92 residues: MARMVMCKKLGKELPGLTFKPFPNELGQRIYDSVSQDAWKLWLEHFKMIMNEYRLSPADPRSQEILYQQAEQFFFSEGAQLPPDYRPPRSKG.

The protein belongs to the Fe(2+)-trafficking protein family.

Functionally, could be a mediator in iron transactions between iron acquisition and iron-requiring processes, such as synthesis and/or repair of Fe-S clusters in biosynthetic enzymes. The sequence is that of Probable Fe(2+)-trafficking protein from Anaeromyxobacter sp. (strain Fw109-5).